The sequence spans 167 residues: Zymogen granule membrane protein 16 (167 aa).

Residues 1–16 (MLAVALLVLLCASASA) form the signal peptide. In terms of domain architecture, Jacalin-type lectin spans 24 to 159 (SSYSGEYGGK…IDSISLHWDT (136 aa)).

Belongs to the jacalin lectin family.

The protein resides in the secreted. It localises to the extracellular space. The protein localises to the extracellular matrix. It is found in the zymogen granule lumen. Its subcellular location is the golgi apparatus lumen. May play a role in protein trafficking. May act as a linker molecule between the submembranous matrix on the luminal side of zymogen granule membrane (ZGM) and aggregated secretory proteins during granule formation in the TGN. This chain is Zymogen granule membrane protein 16 (Zg16), found in Mus musculus (Mouse).